We begin with the raw amino-acid sequence, 421 residues long: Gamma-glutamyl phosphate reductase (421 aa).

Belongs to the gamma-glutamyl phosphate reductase family.

It localises to the cytoplasm. It catalyses the reaction L-glutamate 5-semialdehyde + phosphate + NADP(+) = L-glutamyl 5-phosphate + NADPH + H(+). It functions in the pathway amino-acid biosynthesis; L-proline biosynthesis; L-glutamate 5-semialdehyde from L-glutamate: step 2/2. Catalyzes the NADPH-dependent reduction of L-glutamate 5-phosphate into L-glutamate 5-semialdehyde and phosphate. The product spontaneously undergoes cyclization to form 1-pyrroline-5-carboxylate. The polypeptide is Gamma-glutamyl phosphate reductase (Pseudomonas syringae pv. tomato (strain ATCC BAA-871 / DC3000)).